The chain runs to 537 residues: MSVVLLSSTSATITKSQSKKIPFLSPTTKFPLKVSISPSRSKLFHNPLRVAAPPSVPTSDSTEEKRIEEEYGGDKEEEGSEFKWRDHWYPVSLVEDLDPNVPTPFQLLGRDLVLWFDRNDQKWAAFDDLCPHRLAPLSEGRLDENGHLQCSYHGWSFGGCGSCTRIPQAATSGPEARAVKSPRACAIKFPTMVSQGLLFVWPDENGWDRANSIEPPRLPDDFDKPEFSTVTIQRDLFYGYDTLMENVSDPSHIDFAHHKVTGRRDRAKPLPFKVESSGPWGFQGANDDSPRITAKFVAPCYSMNKIELDAKLPIVGNQKWVIWICSFNIPMAPGKTRSIVCSARNFFQFSVPGPAWWQVVPRWYEHWTSNLVYDGDMIVLQGQEKVFLAKSMESPDYDVNKQYTKLTFTPTQADRFVLAFRNWLRRHGKSQPEWFGSTPSNQPLPSTVLTKRQMLDRFDQHTQVCSSCKGAYNSFQILKKFLVGATVFWAATAGVPSDVQIRLVLAGLSLISAASAYALHEQEKNFVFRDYVHSEIE.

A chloroplast-targeting transit peptide spans 1–49 (MSVVLLSSTSATITKSQSKKIPFLSPTTKFPLKVSISPSRSKLFHNPLR). Positions 51-77 (AAPPSVPTSDSTEEKRIEEEYGGDKEE) are disordered. A compositionally biased stretch (basic and acidic residues) spans 62–77 (TEEKRIEEEYGGDKEE). The 113-residue stretch at 88-200 (WYPVSLVEDL…TMVSQGLLFV (113 aa)) folds into the Rieske domain. Positions 130, 132, 150, and 153 each coordinate [2Fe-2S] cluster.

As to quaternary structure, interacts with HCAR, SGR1, RCCR, PPH and the LHCII complex. Part of a SGR1-CCE-LHCII complex, which acts in chlorophyll breakdown.

The protein localises to the plastid. It localises to the chloroplast thylakoid membrane. The catalysed reaction is pheophorbide a + 2 reduced [2Fe-2S]-[ferredoxin] + O2 + 2 H(+) = red chlorophyll catabolite + 2 oxidized [2Fe-2S]-[ferredoxin]. Its pathway is porphyrin-containing compound metabolism; chlorophyll degradation. Might be regulated by a phosphorylation/dephosphorylation mechanism. Catalyzes the key reaction of chlorophyll catabolism, porphyrin macrocycle cleavage of pheophorbide a (pheide a) to a primary fluorescent catabolite (pFCC). Works in a two-step reaction with red chlorophyll catabolite reductase (RCCR). Creates the intermediate RCC through the opening of the porphyrin macrocycle by the introduction of one atom of molecular oxygen at the alpha-methine bridge. Seems to be specific for pheide a. Belongs to the chlorophyll catabolic enzymes (CCEs). This Arabidopsis thaliana (Mouse-ear cress) protein is Pheophorbide a oxygenase, chloroplastic (PAO).